A 328-amino-acid chain; its full sequence is P2Y purinoceptor 3 (328 aa).

Residues 1–22 (MSMANFTAGRNSCTFQEEFKQV) are Extracellular-facing. N-linked (GlcNAc...) asparagine glycosylation occurs at Asn-5. A helical membrane pass occupies residues 23–43 (LLPLVYSVVFLLGLPLNAVVI). At 44 to 57 (GQIWLARKALTRTT) the chain is on the cytoplasmic side. Residues 58–78 (IYMLNLATADLLYVCSLPLLI) form a helical membrane-spanning segment. Residues 79–96 (YNYTQKDYWPFGDFTCKF) are Extracellular-facing. Cys-94 and Cys-172 are disulfide-bonded. Residues 97–117 (VRFQFYTNLHGSILFLTCISV) form a helical membrane-spanning segment. The Cytoplasmic portion of the chain corresponds to 118 to 139 (QRYMGICHPLASWHKKKGKKLT). The chain crosses the membrane as a helical span at residues 140-160 (WLVCAAVWFIVIAQCLPTFVF). The Extracellular segment spans residues 161–189 (ASTGTQRNRTVCYDLSPPDRSASYFPYGI). Residues 190–210 (TLTITGFLLPFAAILACYCSM) traverse the membrane as a helical segment. At 211–231 (ARILCQKDELIGLAVHKKKDK) the chain is on the cytoplasmic side. The helical transmembrane segment at 232–252 (AVRMIIIVVIVFSISFFPFHL) threads the bilayer. Over 253-275 (TKTIYLIVRSSPTLPCPTLQAFA) the chain is Extracellular. Residues 276–298 (IAYKCTRPFASMNSVLDPILFYF) traverse the membrane as a helical segment. At 299 to 323 (TQRKFRESTRYLLDKMSSKWRHDHC) the chain is on the cytoplasmic side.

Belongs to the G-protein coupled receptor 1 family.

The protein localises to the cell membrane. Receptor for extracellular UDP &gt; ADP = UTP. The activity of this receptor is mediated by G proteins which activate a phosphatidylinositol-calcium second messenger system. This is P2Y purinoceptor 3 (P2RY3) from Meleagris gallopavo (Wild turkey).